A 128-amino-acid chain; its full sequence is Probable 4-amino-4-deoxy-L-arabinose-phosphoundecaprenol flippase subunit ArnF (128 aa).

The Cytoplasmic portion of the chain corresponds to 1–10 (MKGYLWGGAS). The helical transmembrane segment at 11 to 31 (VVLVTVAQLVLKWGMMNIPLL) threads the bilayer. Residues 32–47 (SLADINVQFLTMYFVQ) lie on the Periplasmic side of the membrane. Residues 48-68 (LASVMCGLMGYALSMLCWFFA) traverse the membrane as a helical segment. Over 69-77 (LRYLPLNRA) the chain is Cytoplasmic. The chain crosses the membrane as a helical span at residues 78–98 (YPLLSLSYALVYLGAVLLPWF). Topologically, residues 99 to 101 (NEP) are periplasmic. Residues 102-122 (ATLLKTLGAGFILLGIWLINI) traverse the membrane as a helical segment. The Cytoplasmic portion of the chain corresponds to 123–128 (KPIKAS).

It belongs to the ArnF family. Heterodimer of ArnE and ArnF.

The protein localises to the cell inner membrane. It functions in the pathway bacterial outer membrane biogenesis; lipopolysaccharide biosynthesis. Functionally, translocates 4-amino-4-deoxy-L-arabinose-phosphoundecaprenol (alpha-L-Ara4N-phosphoundecaprenol) from the cytoplasmic to the periplasmic side of the inner membrane. This Yersinia pseudotuberculosis serotype O:1b (strain IP 31758) protein is Probable 4-amino-4-deoxy-L-arabinose-phosphoundecaprenol flippase subunit ArnF.